The primary structure comprises 148 residues: Large ribosomal subunit protein bL9 (148 aa).

It belongs to the bacterial ribosomal protein bL9 family.

Binds to the 23S rRNA. The sequence is that of Large ribosomal subunit protein bL9 from Bifidobacterium adolescentis (strain ATCC 15703 / DSM 20083 / NCTC 11814 / E194a).